Consider the following 510-residue polypeptide: NKAP family protein (510 aa).

Residues 1-22 (MSHRERDRDRDRDSDRDRDRNR) are compositionally biased toward basic and acidic residues. Disordered stretches follow at residues 1–128 (MSHR…VEIQ), 149–220 (ERKD…NYNG), and 239–401 (VYER…PISE). Over residues 23-39 (YSRSRSRGSRSRSRSRS) the composition is skewed to basic residues. Residues 40–89 (RSRDRNRNRDYNKDRSSNRDSYYNDRDYKKDRSSNRDRDYYDRDRNRDYK) show a composition bias toward basic and acidic residues. Residues 96–105 (SSGGGGGGSG) are compositionally biased toward gly residues. 2 stretches are compositionally biased toward low complexity: residues 112-123 (SSSYRESNSNNS) and 184-219 (NNNN…SNYN). Residues 262–273 (NKKKSKKSRRKS) are compositionally biased toward basic residues. Over residues 274 to 283 (SSNSDSSSSD) the composition is skewed to low complexity. Residues 292–322 (REKRKKSKSRKDKKKRKEKKKHQRKSSKRSS) are compositionally biased toward basic residues. The span at 342–351 (DSDRSDSEGR) shows a compositional bias: basic and acidic residues. Basic residues predominate over residues 352 to 367 (SRKKRSKKRSKKRHDH). Basic and acidic residues predominate over residues 368–383 (HKESVHDASMWEEKVE).

Belongs to the NKAP family.

In Dictyostelium discoideum (Social amoeba), this protein is NKAP family protein.